The following is a 143-amino-acid chain: Nucleoside diphosphate kinase (143 aa).

Residues Lys11, Phe59, Arg87, Thr93, Arg104, and Asn114 each contribute to the ATP site. The active-site Pros-phosphohistidine intermediate is His117.

Belongs to the NDK family. Homotetramer. The cofactor is Mg(2+).

The protein localises to the cytoplasm. The enzyme catalyses a 2'-deoxyribonucleoside 5'-diphosphate + ATP = a 2'-deoxyribonucleoside 5'-triphosphate + ADP. It catalyses the reaction a ribonucleoside 5'-diphosphate + ATP = a ribonucleoside 5'-triphosphate + ADP. In terms of biological role, major role in the synthesis of nucleoside triphosphates other than ATP. The ATP gamma phosphate is transferred to the NDP beta phosphate via a ping-pong mechanism, using a phosphorylated active-site intermediate. This chain is Nucleoside diphosphate kinase, found in Psychrobacter cryohalolentis (strain ATCC BAA-1226 / DSM 17306 / VKM B-2378 / K5).